The primary structure comprises 198 residues: Superoxide dismutase [Fe] (198 aa).

Fe cation-binding residues include histidine 27, histidine 74, aspartate 157, and histidine 161.

This sequence belongs to the iron/manganese superoxide dismutase family. Homodimer. It depends on Fe cation as a cofactor.

It carries out the reaction 2 superoxide + 2 H(+) = H2O2 + O2. Its function is as follows. Destroys superoxide anion radicals which are normally produced within the cells and which are toxic to biological systems. The sequence is that of Superoxide dismutase [Fe] (sodB) from Pseudomonas putida (strain ATCC 47054 / DSM 6125 / CFBP 8728 / NCIMB 11950 / KT2440).